The sequence spans 487 residues: Probable Xaa-Pro aminopeptidase MGYG_06974 (487 aa).

Mn(2+) contacts are provided by aspartate 255, aspartate 266, glutamate 414, and glutamate 458.

Belongs to the peptidase M24B family. The cofactor is Mn(2+).

The enzyme catalyses Release of any N-terminal amino acid, including proline, that is linked to proline, even from a dipeptide or tripeptide.. Functionally, catalyzes the removal of a penultimate prolyl residue from the N-termini of peptides. The sequence is that of Probable Xaa-Pro aminopeptidase MGYG_06974 from Arthroderma gypseum (strain ATCC MYA-4604 / CBS 118893) (Microsporum gypseum).